The chain runs to 697 residues: Elongation factor G (697 aa).

Positions 8–290 constitute a tr-type G domain; sequence ERYRNIGIMA…AVLSYMPSPV (283 aa). GTP is bound by residues 17-24, 88-92, and 142-145; these read AHIDAGKT, DTPGH, and NKMD.

This sequence belongs to the TRAFAC class translation factor GTPase superfamily. Classic translation factor GTPase family. EF-G/EF-2 subfamily.

It localises to the cytoplasm. Its function is as follows. Catalyzes the GTP-dependent ribosomal translocation step during translation elongation. During this step, the ribosome changes from the pre-translocational (PRE) to the post-translocational (POST) state as the newly formed A-site-bound peptidyl-tRNA and P-site-bound deacylated tRNA move to the P and E sites, respectively. Catalyzes the coordinated movement of the two tRNA molecules, the mRNA and conformational changes in the ribosome. The protein is Elongation factor G of Nitrosococcus oceani (strain ATCC 19707 / BCRC 17464 / JCM 30415 / NCIMB 11848 / C-107).